A 312-amino-acid chain; its full sequence is Pantothenate kinase (312 aa).

97-104 (GSVAVGKS) contributes to the ATP binding site.

The protein belongs to the prokaryotic pantothenate kinase family.

It localises to the cytoplasm. The catalysed reaction is (R)-pantothenate + ATP = (R)-4'-phosphopantothenate + ADP + H(+). It participates in cofactor biosynthesis; coenzyme A biosynthesis; CoA from (R)-pantothenate: step 1/5. In Mycobacterium marinum (strain ATCC BAA-535 / M), this protein is Pantothenate kinase.